Reading from the N-terminus, the 380-residue chain is 3-isopropylmalate dehydratase large subunit (380 aa).

Positions 262, 320, and 323 each coordinate [4Fe-4S] cluster.

The protein belongs to the aconitase/IPM isomerase family. LeuC type 2 subfamily. In terms of assembly, heterodimer of LeuC and LeuD. [4Fe-4S] cluster is required as a cofactor.

The enzyme catalyses (2R,3S)-3-isopropylmalate = (2S)-2-isopropylmalate. It participates in amino-acid biosynthesis; L-leucine biosynthesis; L-leucine from 3-methyl-2-oxobutanoate: step 2/4. Catalyzes the isomerization between 2-isopropylmalate and 3-isopropylmalate, via the formation of 2-isopropylmaleate. This Thermococcus kodakarensis (strain ATCC BAA-918 / JCM 12380 / KOD1) (Pyrococcus kodakaraensis (strain KOD1)) protein is 3-isopropylmalate dehydratase large subunit.